The sequence spans 82 residues: Putative Fe(2+) transport protein A (82 aa).

It belongs to the FeoA family.

Might be involved in Fe(2+) ion uptake. In Leptolyngbya boryana (Plectonema boryanum), this protein is Putative Fe(2+) transport protein A.